Consider the following 92-residue polypeptide: Large ribosomal subunit protein eL43A (92 aa).

The segment at 39–60 (CSFCGKKTVKRGAAGIWTCSCC) adopts a C4-type zinc-finger fold. At Ser40 the chain carries Phosphoserine.

It belongs to the eukaryotic ribosomal protein eL43 family. In terms of assembly, component of the large ribosomal subunit (LSU). Mature yeast ribosomes consist of a small (40S) and a large (60S) subunit. The 40S small subunit contains 1 molecule of ribosomal RNA (18S rRNA) and 33 different proteins (encoded by 57 genes). The large 60S subunit contains 3 rRNA molecules (25S, 5.8S and 5S rRNA) and 46 different proteins (encoded by 81 genes).

The protein resides in the cytoplasm. Its function is as follows. Component of the ribosome, a large ribonucleoprotein complex responsible for the synthesis of proteins in the cell. The small ribosomal subunit (SSU) binds messenger RNAs (mRNAs) and translates the encoded message by selecting cognate aminoacyl-transfer RNA (tRNA) molecules. The large subunit (LSU) contains the ribosomal catalytic site termed the peptidyl transferase center (PTC), which catalyzes the formation of peptide bonds, thereby polymerizing the amino acids delivered by tRNAs into a polypeptide chain. The nascent polypeptides leave the ribosome through a tunnel in the LSU and interact with protein factors that function in enzymatic processing, targeting, and the membrane insertion of nascent chains at the exit of the ribosomal tunnel. The sequence is that of Large ribosomal subunit protein eL43A from Saccharomyces cerevisiae (strain ATCC 204508 / S288c) (Baker's yeast).